We begin with the raw amino-acid sequence, 199 residues long: Putative DNA-directed RNA polymerase subunit L376 (199 aa).

Belongs to the eukaryotic RPB7/RPC8 RNA polymerase subunit family.

The protein resides in the virion. The catalysed reaction is RNA(n) + a ribonucleoside 5'-triphosphate = RNA(n+1) + diphosphate. The polypeptide is Putative DNA-directed RNA polymerase subunit L376 (Acanthamoeba polyphaga (Amoeba)).